The primary structure comprises 826 residues: BLOC-2 complex member HPS5 homolog (826 aa).

WD repeat units follow at residues 22-61 (KHHN…LLLI), 63-102 (NKHG…QATP), and 110-149 (DQSV…GHSL). Positions 422–446 (ALDTHSSGGSSATTERSLSGGSSSR) are enriched in polar residues. Residues 422–447 (ALDTHSSGGSSATTERSLSGGSSSRA) are disordered.

The protein belongs to the HPS5 family. In terms of tissue distribution, expressed in eye pigment granules.

Functionally, has a role in the biogenesis of eye pigment granules. Eye pigment granules are specialized forms of late endosomes or lysosomes. Biogenesis of pigment granules in the eye requires molecular components required for protein delivery to lysosomes. The chain is BLOC-2 complex member HPS5 homolog from Drosophila melanogaster (Fruit fly).